Consider the following 308-residue polypeptide: Peptidyl-prolyl cis-trans isomerase CYP8 (308 aa).

The region spanning 56-215 is the PPIase cyclophilin-type domain; that stretch reads FTDPESSEEA…QPITIGYISS (160 aa).

It carries out the reaction [protein]-peptidylproline (omega=180) = [protein]-peptidylproline (omega=0). Functionally, PPIases accelerate the folding of proteins. It catalyzes the cis-trans isomerization of proline imidic peptide bonds in oligopeptides. The chain is Peptidyl-prolyl cis-trans isomerase CYP8 (CPR8) from Saccharomyces cerevisiae (strain ATCC 204508 / S288c) (Baker's yeast).